A 331-amino-acid polypeptide reads, in one-letter code: Cytosolic 5'-nucleotidase 3A (331 aa).

Catalysis depends on D83, which acts as the Nucleophile. Positions 83 and 85 each coordinate Mg(2+). The Proton donor role is filled by D85. CMP is bound at residue E130. The N(7)-methyl-GMP site is built by E130 and S151. Residues 198 to 199 (SA) and K247 contribute to the substrate site. Mg(2+) is bound at residue D272.

Belongs to the pyrimidine 5'-nucleotidase family.

The protein localises to the cytoplasm. The catalysed reaction is N(7)-methyl-GMP + H2O = N(7)-methylguanosine + phosphate. The enzyme catalyses a ribonucleoside 5'-phosphate + H2O = a ribonucleoside + phosphate. In terms of biological role, nucleotidase which shows specific activity towards cytidine monophosphate (CMP) and 7-methylguanosine monophosphate (m(7)GMP). CMP seems to be the preferred substrate. The chain is Cytosolic 5'-nucleotidase 3A (NT5C3A) from Gallus gallus (Chicken).